A 219-amino-acid polypeptide reads, in one-letter code: MSDDLVKILVLGPSKSGKSTVTNFLAGTRDTPTKEYHETNPLRVLEVEIALDDTRRSGRQAAGLKKAVVQLWDVGGSSKHQAGWPAIASNADGIIYVFNPEVKGSEKELLLWYKNFALNQDELDDDNNFKMRVTDGHSLIFSHHSSLPEFAVGDNAIPPMPKQLQGIRALETSLDYQSDNFKEAFDALVEQIIASRLAAEENDLLQKEREAKDYPRLKR.

GTP is bound by residues 12 to 19 (GPSKSGKS) and 72 to 79 (WDVGGSSK).

This sequence belongs to the small GTPase superfamily. Rab family.

The protein localises to the cytoplasm. Its subcellular location is the cytoskeleton. It is found in the flagellum basal body. It localises to the cell projection. The protein resides in the cilium. The protein localises to the flagellum. Its function is as follows. Required for flagellum formation. The chain is Intraflagellar transport protein 22 (IFT22) from Trypanosoma brucei brucei (strain 927/4 GUTat10.1).